Reading from the N-terminus, the 363-residue chain is Carbamoyl phosphate synthase small chain (363 aa).

Residues 1–172 are CPSase; sequence MKAFLVLDNG…TKYIFGTHTG (172 aa). Positions 45, 224, and 226 each coordinate L-glutamine. In terms of domain architecture, Glutamine amidotransferase type-1 spans 176–362; that stretch reads KLAVYDYGVK…YDLVETTKRG (187 aa). The active-site Nucleophile is the Cys252. L-glutamine-binding residues include Leu253, Gln256, Asn294, Gly296, and Phe297. Catalysis depends on residues His335 and Glu337.

This sequence belongs to the CarA family. In terms of assembly, composed of two chains; the small (or glutamine) chain promotes the hydrolysis of glutamine to ammonia, which is used by the large (or ammonia) chain to synthesize carbamoyl phosphate. Tetramer of heterodimers (alpha,beta)4.

It catalyses the reaction hydrogencarbonate + L-glutamine + 2 ATP + H2O = carbamoyl phosphate + L-glutamate + 2 ADP + phosphate + 2 H(+). It carries out the reaction L-glutamine + H2O = L-glutamate + NH4(+). It functions in the pathway amino-acid biosynthesis; L-arginine biosynthesis; carbamoyl phosphate from bicarbonate: step 1/1. It participates in pyrimidine metabolism; UMP biosynthesis via de novo pathway; (S)-dihydroorotate from bicarbonate: step 1/3. Small subunit of the glutamine-dependent carbamoyl phosphate synthetase (CPSase). CPSase catalyzes the formation of carbamoyl phosphate from the ammonia moiety of glutamine, carbonate, and phosphate donated by ATP, constituting the first step of 2 biosynthetic pathways, one leading to arginine and/or urea and the other to pyrimidine nucleotides. The small subunit (glutamine amidotransferase) binds and cleaves glutamine to supply the large subunit with the substrate ammonia. This is Carbamoyl phosphate synthase small chain from Leptospira borgpetersenii serovar Hardjo-bovis (strain L550).